The chain runs to 104 residues: DNA-directed RNA polymerase subunit Rpo13 (104 aa).

2 disordered regions span residues 1 to 34 and 76 to 104; these read MVSG…EEFP and EKRD…SVEG. The segment covering 7-31 has biased composition (acidic residues); it reads TEEEKEGTNDEEVSEEREVEETSEE. Glu-32 contributes to the DNA binding site. Basic residues predominate over residues 80 to 104; that stretch reads SRRKAKKAASKKVKKTKKKEKSVEG. A required to bind DNA region spans residues 81 to 104; that stretch reads RRKAKKAASKKVKKTKKKEKSVEG.

The protein belongs to the archaeal Rpo13 RNA polymerase subunit family. In terms of assembly, part of the 13-subunit RNA polymerase complex. Rpo1N and Rpo5 form a cleft which docks Rpo13. Forms predominantly dimers in solution, although monomers and trimers can also be seen. Found associated with RNAP but also as a homodimer pool in the cytoplasm in vivo.

The protein localises to the cytoplasm. The catalysed reaction is RNA(n) + a ribonucleoside 5'-triphosphate = RNA(n+1) + diphosphate. In terms of biological role, DNA-dependent RNA polymerase (RNAP) catalyzes the transcription of DNA into RNA using the four ribonucleoside triphosphates as substrates. A molten-globule protein, it binds dsDNA in the RNAP, in vitro binds dsDNA but not ssDNA. Its position in RNAP implies it functions in both transcription initiation and elongation. The sequence is that of DNA-directed RNA polymerase subunit Rpo13 from Saccharolobus shibatae (strain ATCC 51178 / DSM 5389 / JCM 8931 / NBRC 15437 / B12) (Sulfolobus shibatae).